A 153-amino-acid polypeptide reads, in one-letter code: Nucleoside diphosphate kinase (153 aa).

The ATP site is built by Lys-13, Phe-61, Arg-89, Thr-95, Arg-106, and Asn-116. His-119 acts as the Pros-phosphohistidine intermediate in catalysis.

The protein belongs to the NDK family. Requires Mg(2+) as cofactor. As to expression, highest levels in the liver and kidney with lower levels in the heart, brain and breast muscle.

It is found in the cytoplasm. The protein resides in the cell membrane. It carries out the reaction a 2'-deoxyribonucleoside 5'-diphosphate + ATP = a 2'-deoxyribonucleoside 5'-triphosphate + ADP. The enzyme catalyses a ribonucleoside 5'-diphosphate + ATP = a ribonucleoside 5'-triphosphate + ADP. Major role in the synthesis of nucleoside triphosphates other than ATP. The ATP gamma phosphate is transferred to the NDP beta phosphate via a ping-pong mechanism, using a phosphorylated active-site intermediate. In Columba livia (Rock dove), this protein is Nucleoside diphosphate kinase.